A 317-amino-acid polypeptide reads, in one-letter code: Metaxin-1 (317 aa).

Residues K38, K41, and K78 each participate in a glycyl lysine isopeptide (Lys-Gly) (interchain with G-Cter in ubiquitin) cross-link. Residues 164 to 184 form a helical membrane-spanning segment; the sequence is EELEKELYQEAQECLTLLSQR.

It belongs to the metaxin family. As to quaternary structure, interacts with MTX2/metaxin-2. Associates with the mitochondrial contact site and cristae organizing system (MICOS) complex, composed of at least MICOS10/MIC10, CHCHD3/MIC19, CHCHD6/MIC25, APOOL/MIC27, IMMT/MIC60, APOO/MIC23/MIC26 and QIL1/MIC13. This complex was also known under the names MINOS or MitOS complex. The MICOS complex associates with mitochondrial outer membrane proteins SAMM50, MTX1 and MTX2 (together described as components of the mitochondrial outer membrane sorting assembly machinery (SAM) complex) and DNAJC11, mitochondrial inner membrane protein TMEM11 and with HSPA9. The MICOS and SAM complexes together with DNAJC11 are part of a large protein complex spanning both membranes termed the mitochondrial intermembrane space bridging (MIB) complex. Interacts with ARMC1. In terms of processing, ubiquitinated by PRKN during mitophagy, leading to its degradation and enhancement of mitophagy. Deubiquitinated by USP30.

It localises to the mitochondrion outer membrane. Its function is as follows. Involved in transport of proteins into the mitochondrion. Essential for embryonic development. The polypeptide is Metaxin-1 (MTX1) (Bos taurus (Bovine)).